Here is a 202-residue protein sequence, read N- to C-terminus: Cytochrome c oxidase assembly protein CtaG (202 aa).

Topologically, residues 1–14 (MSENAGTPKKQGRN) are cytoplasmic. A helical; Signal-anchor for type II membrane protein transmembrane segment spans residues 15 to 37 (NGAVVMMCLSFVFGMGAMSYAAV). Topologically, residues 38–202 (PLYRIFCQVT…GGAEKIEKKL (165 aa)) are periplasmic.

The protein belongs to the COX11/CtaG family.

The protein localises to the cell inner membrane. Its function is as follows. Exerts its effect at some terminal stage of cytochrome c oxidase synthesis, probably by being involved in the insertion of the copper B into subunit I. This Rhizobium johnstonii (strain DSM 114642 / LMG 32736 / 3841) (Rhizobium leguminosarum bv. viciae) protein is Cytochrome c oxidase assembly protein CtaG.